The following is a 457-amino-acid chain: Cysteine--tRNA ligase (457 aa).

Cysteine 27 is a Zn(2+) binding site. A 'HIGH' region motif is present at residues 29–39; that stretch reads PTVYDFAHIGN. Positions 211, 236, and 240 each coordinate Zn(2+). A 'KMSKS' region motif is present at residues 269-273; that stretch reads KMSKS. Lysine 272 contributes to the ATP binding site.

Belongs to the class-I aminoacyl-tRNA synthetase family. As to quaternary structure, monomer. Zn(2+) serves as cofactor.

It is found in the cytoplasm. The catalysed reaction is tRNA(Cys) + L-cysteine + ATP = L-cysteinyl-tRNA(Cys) + AMP + diphosphate. The sequence is that of Cysteine--tRNA ligase from Ehrlichia ruminantium (strain Welgevonden).